The primary structure comprises 473 residues: 3-isopropylmalate dehydratase large subunit (473 aa).

[4Fe-4S] cluster-binding residues include Cys-354, Cys-414, and Cys-417.

This sequence belongs to the aconitase/IPM isomerase family. LeuC type 1 subfamily. Heterodimer of LeuC and LeuD. It depends on [4Fe-4S] cluster as a cofactor.

The catalysed reaction is (2R,3S)-3-isopropylmalate = (2S)-2-isopropylmalate. Its pathway is amino-acid biosynthesis; L-leucine biosynthesis; L-leucine from 3-methyl-2-oxobutanoate: step 2/4. Catalyzes the isomerization between 2-isopropylmalate and 3-isopropylmalate, via the formation of 2-isopropylmaleate. The sequence is that of 3-isopropylmalate dehydratase large subunit from Mycobacterium ulcerans (strain Agy99).